Here is a 341-residue protein sequence, read N- to C-terminus: tRNA N6-adenosine threonylcarbamoyltransferase (341 aa).

Fe cation contacts are provided by histidine 111 and histidine 115. Residues 134–138, aspartate 167, glycine 180, and asparagine 272 each bind substrate; that span reads LVSGG. Residue aspartate 300 coordinates Fe cation.

This sequence belongs to the KAE1 / TsaD family. The cofactor is Fe(2+).

It localises to the cytoplasm. It carries out the reaction L-threonylcarbamoyladenylate + adenosine(37) in tRNA = N(6)-L-threonylcarbamoyladenosine(37) in tRNA + AMP + H(+). Functionally, required for the formation of a threonylcarbamoyl group on adenosine at position 37 (t(6)A37) in tRNAs that read codons beginning with adenine. Is involved in the transfer of the threonylcarbamoyl moiety of threonylcarbamoyl-AMP (TC-AMP) to the N6 group of A37, together with TsaE and TsaB. TsaD likely plays a direct catalytic role in this reaction. The chain is tRNA N6-adenosine threonylcarbamoyltransferase from Psychromonas ingrahamii (strain DSM 17664 / CCUG 51855 / 37).